We begin with the raw amino-acid sequence, 338 residues long: Cytochrome bd ubiquinol oxidase subunit 2 (338 aa).

9 helical membrane passes run 7-27 (LWFILVAVLFVGFFFLEGFDF), 50-70 (IGPFWDANEVWLLTGAGAIFA), 75-95 (WYATMLSGYYIPFVIVLLALM), 119-139 (VVFFGSLIPPFVLGVLFTTLF), 163-183 (ILGGVTVTLLCFQHGLMFITL), 196-216 (MAQKIMGVVFVAVLAFAALSA), 227-247 (EITIPLAVLIVICFMLAAVFI), 256-276 (FGMTGAGLALTVGMIFISLFP), and 306-326 (IAALTLLPFVIGSQIWSYYVF).

It belongs to the cytochrome ubiquinol oxidase subunit 2 family. As to quaternary structure, heterodimer of subunits I and II. The cofactor is heme b. Heme d cis-diol is required as a cofactor.

It localises to the cell membrane. The catalysed reaction is 2 a ubiquinol + O2(in) + 4 H(+)(in) = 2 a ubiquinone + 2 H2O(in) + 4 H(+)(out). This chain is Cytochrome bd ubiquinol oxidase subunit 2 (cydB), found in Bacillus subtilis (strain 168).